The chain runs to 357 residues: Protein RecA (357 aa).

67-74 provides a ligand contact to ATP; that stretch reads GPESSGKT. Residues 333–357 are disordered; the sequence is NELTPATAGNSHDEDAFADEGNEEF. The segment covering 348 to 357 has biased composition (acidic residues); sequence AFADEGNEEF.

This sequence belongs to the RecA family.

Its subcellular location is the cytoplasm. Functionally, can catalyze the hydrolysis of ATP in the presence of single-stranded DNA, the ATP-dependent uptake of single-stranded DNA by duplex DNA, and the ATP-dependent hybridization of homologous single-stranded DNAs. It interacts with LexA causing its activation and leading to its autocatalytic cleavage. The protein is Protein RecA of Pectobacterium carotovorum subsp. carotovorum (strain PC1).